Here is a 391-residue protein sequence, read N- to C-terminus: GTPase HflX (391 aa).

Residues 162–181 (LAQQRGGAKGTRGASRGAGE) are disordered. Residues 222–391 (KIGAIVGYTN…KITDIIIFDK (170 aa)) enclose the Hflx-type G domain. Residues 228-235 (GYTNAGKS), 253-257 (FATLD), 278-281 (DTVG), 344-347 (NKMD), and 369-371 (SVT) each bind GTP. Mg(2+) is bound by residues Ser-235 and Thr-255.

This sequence belongs to the TRAFAC class OBG-HflX-like GTPase superfamily. HflX GTPase family. As to quaternary structure, monomer. Associates with the 50S ribosomal subunit. Mg(2+) is required as a cofactor.

It is found in the cytoplasm. Its function is as follows. GTPase that associates with the 50S ribosomal subunit and may have a role during protein synthesis or ribosome biogenesis. In Treponema denticola (strain ATCC 35405 / DSM 14222 / CIP 103919 / JCM 8153 / KCTC 15104), this protein is GTPase HflX.